The sequence spans 316 residues: Acetyl-coenzyme A carboxylase carboxyl transferase subunit beta (316 aa).

The CoA carboxyltransferase N-terminal domain maps to L29 to H298. The Zn(2+) site is built by C33, C36, C52, and C55. The segment at C33–C55 adopts a C4-type zinc-finger fold.

It belongs to the AccD/PCCB family. Acetyl-CoA carboxylase is a heterohexamer composed of biotin carboxyl carrier protein (AccB), biotin carboxylase (AccC) and two subunits each of ACCase subunit alpha (AccA) and ACCase subunit beta (AccD). Requires Zn(2+) as cofactor.

It localises to the cytoplasm. The enzyme catalyses N(6)-carboxybiotinyl-L-lysyl-[protein] + acetyl-CoA = N(6)-biotinyl-L-lysyl-[protein] + malonyl-CoA. It functions in the pathway lipid metabolism; malonyl-CoA biosynthesis; malonyl-CoA from acetyl-CoA: step 1/1. Component of the acetyl coenzyme A carboxylase (ACC) complex. Biotin carboxylase (BC) catalyzes the carboxylation of biotin on its carrier protein (BCCP) and then the CO(2) group is transferred by the transcarboxylase to acetyl-CoA to form malonyl-CoA. The chain is Acetyl-coenzyme A carboxylase carboxyl transferase subunit beta from Microcystis aeruginosa (strain NIES-843 / IAM M-2473).